The chain runs to 402 residues: Endo-polygalacturonase (402 aa).

The N-terminal stretch at 1-23 is a signal peptide; it reads MEYQSGKRVLSLSLGLIGLFSAS. Cystine bridges form between cysteine 41–cysteine 62 and cysteine 115–cysteine 125. Residue aspartate 249 is the Proton donor of the active site. Histidine 277 is an active-site residue.

Belongs to the glycosyl hydrolase 28 family. As to quaternary structure, monomer.

It is found in the secreted. It carries out the reaction (1,4-alpha-D-galacturonosyl)n+m + H2O = (1,4-alpha-D-galacturonosyl)n + (1,4-alpha-D-galacturonosyl)m.. In terms of biological role, involved in maceration and soft-rotting of plant tissue. The protein is Endo-polygalacturonase (pehA) of Pectobacterium parmentieri.